The primary structure comprises 912 residues: Transferrin-binding protein A (912 aa).

An N-terminal signal peptide occupies residues 1-23 (MTKKPYFRLSIISCLLISCYVKA). Residues 50-57 (ETISVTAE) carry the TonB box motif. Residues 63-188 (KDNEVTGLGK…LAGSVTFQSK (126 aa)) enclose the TBDR plug domain. Residues 199–912 (SWGIQTKNAY…NYTLTLEMKF (714 aa)) enclose the TBDR beta-barrel domain. The short motif at 895–912 (TRYAASGRNYTLTLEMKF) is the TonB C-terminal box element.

This sequence belongs to the TonB-dependent receptor family.

Its subcellular location is the cell outer membrane. In terms of biological role, haemophilus acquires iron by extracting it from serum transferrin (TF) in its human host. Acts as a transferrin receptor and is required for transferrin utilization. In Haemophilus influenzae (strain ATCC 51907 / DSM 11121 / KW20 / Rd), this protein is Transferrin-binding protein A.